Here is a 396-residue protein sequence, read N- to C-terminus: Chaperone protein DnaJ 1 (396 aa).

The 66-residue stretch at D10–R75 folds into the J domain. A compositionally biased stretch (gly residues) spans L127–T137. A disordered region spans residues L127–I149. The segment at G163–S241 adopts a CR-type zinc-finger fold. Zn(2+)-binding residues include C176, C179, C192, C195, C215, C218, C229, and C232. CXXCXGXG motif repeat units follow at residues C176–G183, C192–G199, C215–G222, and C229–G236.

The protein belongs to the DnaJ family. As to quaternary structure, homodimer. Requires Zn(2+) as cofactor.

The protein resides in the cytoplasm. In terms of biological role, participates actively in the response to hyperosmotic and heat shock by preventing the aggregation of stress-denatured proteins and by disaggregating proteins, also in an autonomous, DnaK-independent fashion. Unfolded proteins bind initially to DnaJ; upon interaction with the DnaJ-bound protein, DnaK hydrolyzes its bound ATP, resulting in the formation of a stable complex. GrpE releases ADP from DnaK; ATP binding to DnaK triggers the release of the substrate protein, thus completing the reaction cycle. Several rounds of ATP-dependent interactions between DnaJ, DnaK and GrpE are required for fully efficient folding. Also involved, together with DnaK and GrpE, in the DNA replication of plasmids through activation of initiation proteins. This is Chaperone protein DnaJ 1 from Streptomyces avermitilis (strain ATCC 31267 / DSM 46492 / JCM 5070 / NBRC 14893 / NCIMB 12804 / NRRL 8165 / MA-4680).